Here is a 491-residue protein sequence, read N- to C-terminus: Anthranilate synthase component 1 (491 aa).

L-tryptophan-binding positions include Ser-49 and 271 to 273 (PYL). 306–307 (GT) contributes to the chorismate binding site. Mg(2+) is bound at residue Glu-333. Chorismate is bound by residues Tyr-421, Arg-441, 455 to 457 (GAG), and Gly-457. A Mg(2+)-binding site is contributed by Glu-470.

This sequence belongs to the anthranilate synthase component I family. As to quaternary structure, heterotetramer consisting of two non-identical subunits: a beta subunit (TrpG) and a large alpha subunit (TrpE). The cofactor is Mg(2+).

It carries out the reaction chorismate + L-glutamine = anthranilate + pyruvate + L-glutamate + H(+). It functions in the pathway amino-acid biosynthesis; L-tryptophan biosynthesis; L-tryptophan from chorismate: step 1/5. With respect to regulation, feedback inhibited by tryptophan. In terms of biological role, part of a heterotetrameric complex that catalyzes the two-step biosynthesis of anthranilate, an intermediate in the biosynthesis of L-tryptophan. In the first step, the glutamine-binding beta subunit (TrpG) of anthranilate synthase (AS) provides the glutamine amidotransferase activity which generates ammonia as a substrate that, along with chorismate, is used in the second step, catalyzed by the large alpha subunit of AS (TrpE) to produce anthranilate. In the absence of TrpG, TrpE can synthesize anthranilate directly from chorismate and high concentrations of ammonia. The sequence is that of Anthranilate synthase component 1 (trpE) from Neisseria meningitidis serogroup A / serotype 4A (strain DSM 15465 / Z2491).